The primary structure comprises 212 residues: Probable 2-dehydro-3-deoxy-6-phosphogalactonate aldolase (212 aa).

Position 18 (Arg18) interacts with 2-dehydro-3-deoxy-6-phospho-D-galactonate. Glu41 serves as the catalytic Proton donor/acceptor. Residues Thr70, Lys130, Gly160, Gly180, and Ser181 each contribute to the 2-dehydro-3-deoxy-6-phospho-D-galactonate site. The Schiff-base intermediate with substrate role is filled by Lys130.

Belongs to the KHG/KDPG aldolase family. In terms of assembly, homotrimer.

It carries out the reaction 2-dehydro-3-deoxy-6-phospho-D-galactonate = D-glyceraldehyde 3-phosphate + pyruvate. Its pathway is carbohydrate acid metabolism; D-galactonate degradation; D-glyceraldehyde 3-phosphate and pyruvate from D-galactonate: step 3/3. In terms of biological role, involved in the degradation of galactose via the DeLey-Doudoroff pathway. Catalyzes the reversible, stereospecific retro-aldol cleavage of 2-keto-3-deoxy-6-phosphogalactonate (KDPGal) to pyruvate and D-glyceraldehyde-3-phosphate. The chain is Probable 2-dehydro-3-deoxy-6-phosphogalactonate aldolase (dgoA) from Rhizobium meliloti (strain 1021) (Ensifer meliloti).